The primary structure comprises 808 residues: Dynamin-like protein B (808 aa).

The 298-residue stretch at 43–340 (FIETPEFVFI…TWRKYLDSVP (298 aa)) folds into the Dynamin-type G domain. The segment at 53 to 60 (GKDGNGKS) is G1 motif. 53–60 (GKDGNGKS) provides a ligand contact to GTP. A G2 motif region spans residues 79-80 (LR). Positions 150-153 (EPPS) are G3 motif. GTP contacts are provided by residues 150–154 (EPPSV) and 239–242 (NKFH). A G4 motif region spans residues 239–242 (NKFH). The tract at residues 276-279 (PSTA) is G5 motif. 2 disordered regions span residues 536 to 565 (SSFRRHGNSTSLFQDNSSPSSQSQSQSSSI) and 665 to 695 (SLNNNNKSTTPGNNNNNNNNNSNNNYNNSNH). Composition is skewed to low complexity over residues 552–565 (SSPSSQSQSQSSSI) and 665–694 (SLNNNNKSTTPGNNNNNNNNNSNNNYNNSN).

Belongs to the TRAFAC class dynamin-like GTPase superfamily. Dynamin/Fzo/YdjA family.

It is found in the cytoplasm. The enzyme catalyses GTP + H2O = GDP + phosphate + H(+). Functionally, involved in cytokinesis. May hydrolyze GTP. The protein is Dynamin-like protein B (dlpB) of Dictyostelium discoideum (Social amoeba).